A 517-amino-acid chain; its full sequence is Protein AGENET DOMAIN (AGD)-CONTAINING P1 (517 aa).

The tract at residues 1-35 (MLRPRRSLGVSSPAKQRKKAAPKNSMATRANRKRL) is disordered. 2 plant Agenet, chromatin-binding regions span residues 37–111 (SYLK…PPMS) and 117–173 (KKIV…EWVD). A disordered region spans residues 177–202 (KPPLEETEEEEDESEEDKLDDSEDEE). Positions 181-202 (EETEEEEDESEEDKLDDSEDEE) are enriched in acidic residues. 4 plant Agenet, chromatin-binding regions span residues 219–287 (QMFS…PRDE), 289–345 (IDFA…DWVD), 378–446 (QAFS…LESV), and 449–505 (SPFE…EWID).

Expressed ubiquitously during vegetative stage, in meristems (e.g. root tips and shoot apical meristem), and in ovules and young seeds during reproductive stage.

The protein resides in the nucleus. Its function is as follows. Heterochromatin-binding protein that preferentially occupies long transposons and specifically recognizes the histone H3 'Lys-9' methylation (H3K9me) marks, with a stronger affinity for dimethylated H3K9 (H3K9me2). Required for transcriptional silencing, non-CG DNA methylation (e.g. CHG and CHH regions), and H3K9 dimethylation (H3K9me2) at some loci. Mediates heterochromatin phase separation and chromocenter formation. The chain is Protein AGENET DOMAIN (AGD)-CONTAINING P1 from Arabidopsis thaliana (Mouse-ear cress).